The following is a 401-amino-acid chain: Ureide permease 4 (401 aa).

The Extracellular segment spans residues 1–10 (MYVVESKAGA). The helical transmembrane segment at 11–31 (IGCMILSLCCLGSWPAILTLL) threads the bilayer. The Cytoplasmic segment spans residues 32–40 (ERRGRLPQH). Residues 41 to 61 (TFLDFATANLLAAIVIAFSLG) form a helical membrane-spanning segment. Topologically, residues 62 to 81 (EIGKSTFLKPDFTTQLPQDN) are extracellular. A helical membrane pass occupies residues 82–102 (WPSVLLAVAGGVLLSIGNLAT). Residues 103 to 104 (QY) are Cytoplasmic-facing. A helical transmembrane segment spans residues 105–125 (AFAFVGLSVTEVITASITVVI). The Extracellular portion of the chain corresponds to 126 to 141 (GTTLNYFLDNKINKAE). Residues 142-162 (ILFPGVGCFLIAVFLGAAVHA) traverse the membrane as a helical segment. The Cytoplasmic segment spans residues 163-231 (SNAADVKEKL…KRAIKVFGKS (69 aa)). ATP is bound at residue 224 to 231 (AIKVFGKS). A helical membrane pass occupies residues 232–252 (IMIGLFITLFAGISLSLFSPA). Residues 253 to 275 (FNLATNDQWSTLPKGVPKLVVYT) lie on the Extracellular side of the membrane. The helical transmembrane segment at 276–296 (AFFYFSIAGFLISLILNLIFL) threads the bilayer. Residues 297–318 (YRPMVGLARSSLKKYIYDSKGR) lie on the Cytoplasmic side of the membrane. The helical transmembrane segment at 319 to 339 (GWAVFAGFLCGFGNGLQFMGG) threads the bilayer. At 340–344 (QAAGY) the chain is on the extracellular side. A helical transmembrane segment spans residues 345 to 365 (AAADSVQALPLVSTFWGIVLF). Residues 366-374 (GEYRKSSKR) lie on the Cytoplasmic side of the membrane. Residues 375 to 395 (TYALLVSMLAMFVAAVAILMA) form a helical membrane-spanning segment. At 396 to 401 (SSGHRK) the chain is on the extracellular side.

The protein belongs to the plant ureide permease (TC 2.A.7.19) family. Expressed in developing seedlings, flower filaments and stigma, and the top and bottom parts of carpels in siliques.

It is found in the membrane. Proton-coupled transporter that transports a wide spectrum of oxo derivatives of heterocyclic nitrogen compounds. The protein is Ureide permease 4 of Arabidopsis thaliana (Mouse-ear cress).